The chain runs to 631 residues: 1-deoxy-D-xylulose-5-phosphate synthase (631 aa).

Residues H73 and 114–116 each bind thiamine diphosphate; that span reads GHS. Mg(2+) is bound at residue D145. Thiamine diphosphate is bound by residues 146–147, N174, Y285, and E366; that span reads GA. Residue N174 participates in Mg(2+) binding.

The protein belongs to the transketolase family. DXPS subfamily. Homodimer. Requires Mg(2+) as cofactor. Thiamine diphosphate is required as a cofactor.

The catalysed reaction is D-glyceraldehyde 3-phosphate + pyruvate + H(+) = 1-deoxy-D-xylulose 5-phosphate + CO2. The protein operates within metabolic intermediate biosynthesis; 1-deoxy-D-xylulose 5-phosphate biosynthesis; 1-deoxy-D-xylulose 5-phosphate from D-glyceraldehyde 3-phosphate and pyruvate: step 1/1. Its function is as follows. Catalyzes the acyloin condensation reaction between C atoms 2 and 3 of pyruvate and glyceraldehyde 3-phosphate to yield 1-deoxy-D-xylulose-5-phosphate (DXP). This chain is 1-deoxy-D-xylulose-5-phosphate synthase, found in Desulfitobacterium hafniense (strain Y51).